The primary structure comprises 430 residues: Histidine--tRNA ligase (430 aa).

The protein belongs to the class-II aminoacyl-tRNA synthetase family. As to quaternary structure, homodimer.

The protein localises to the cytoplasm. The enzyme catalyses tRNA(His) + L-histidine + ATP = L-histidyl-tRNA(His) + AMP + diphosphate + H(+). This is Histidine--tRNA ligase from Chlorobium limicola (strain DSM 245 / NBRC 103803 / 6330).